The sequence spans 597 residues: Elongation factor 4 (597 aa).

A tr-type G domain is found at 2–184 (KNIRNFSIIA…SIVEHLPAPE (183 aa)). GTP is bound by residues 14 to 19 (DHGKST) and 131 to 134 (NKID).

This sequence belongs to the TRAFAC class translation factor GTPase superfamily. Classic translation factor GTPase family. LepA subfamily.

It localises to the cell inner membrane. It carries out the reaction GTP + H2O = GDP + phosphate + H(+). Functionally, required for accurate and efficient protein synthesis under certain stress conditions. May act as a fidelity factor of the translation reaction, by catalyzing a one-codon backward translocation of tRNAs on improperly translocated ribosomes. Back-translocation proceeds from a post-translocation (POST) complex to a pre-translocation (PRE) complex, thus giving elongation factor G a second chance to translocate the tRNAs correctly. Binds to ribosomes in a GTP-dependent manner. This is Elongation factor 4 from Desulfotalea psychrophila (strain LSv54 / DSM 12343).